Consider the following 437-residue polypeptide: Adenosylhomocysteinase (437 aa).

Residues threonine 54, aspartate 125, and glutamate 170 each coordinate substrate. 171-173 (TTT) contributes to the NAD(+) binding site. Substrate contacts are provided by lysine 200 and aspartate 204. NAD(+) is bound by residues asparagine 205, 234-239 (GYGWVG), glutamate 258, asparagine 293, 314-316 (AGH), and asparagine 361.

Belongs to the adenosylhomocysteinase family. Requires NAD(+) as cofactor.

The protein localises to the cytoplasm. The enzyme catalyses S-adenosyl-L-homocysteine + H2O = L-homocysteine + adenosine. Its pathway is amino-acid biosynthesis; L-homocysteine biosynthesis; L-homocysteine from S-adenosyl-L-homocysteine: step 1/1. Its function is as follows. May play a key role in the regulation of the intracellular concentration of adenosylhomocysteine. This is Adenosylhomocysteinase from Pyrobaculum aerophilum (strain ATCC 51768 / DSM 7523 / JCM 9630 / CIP 104966 / NBRC 100827 / IM2).